We begin with the raw amino-acid sequence, 165 residues long: uncharacterized protein (165 aa).

Residues 1 to 36 (MTRLCLPRPEAREDPIPVPPRGLGAGEGSGSPVRPP) are disordered. A helical transmembrane segment spans residues 135–155 (LLLLMGLGPLLRACGMPLTLL).

Its subcellular location is the membrane. This is an uncharacterized protein from Homo sapiens (Human).